Here is a 415-residue protein sequence, read N- to C-terminus: 3-oxoacyl-[acyl-carrier-protein] synthase 2 (415 aa).

The 410-residue stretch at Lys-3 to Lys-412 folds into the Ketosynthase family 3 (KS3) domain. Catalysis depends on for beta-ketoacyl synthase activity residues Cys-164, His-304, and His-342.

It belongs to the thiolase-like superfamily. Beta-ketoacyl-ACP synthases family. Homodimer.

The enzyme catalyses a fatty acyl-[ACP] + malonyl-[ACP] + H(+) = a 3-oxoacyl-[ACP] + holo-[ACP] + CO2. It catalyses the reaction (9Z)-hexadecenoyl-[ACP] + malonyl-[ACP] + H(+) = 3-oxo-(11Z)-octadecenoyl-[ACP] + holo-[ACP] + CO2. It functions in the pathway lipid metabolism; fatty acid biosynthesis. Involved in the type II fatty acid elongation cycle. Catalyzes the elongation of a wide range of acyl-ACP by the addition of two carbons from malonyl-ACP to an acyl acceptor. Can efficiently catalyze the conversion of palmitoleoyl-ACP (cis-hexadec-9-enoyl-ACP) to cis-vaccenoyl-ACP (cis-octadec-11-enoyl-ACP), an essential step in the thermal regulation of fatty acid composition. The sequence is that of 3-oxoacyl-[acyl-carrier-protein] synthase 2 (fabF) from Vibrio harveyi (Beneckea harveyi).